The chain runs to 340 residues: N-acetyl-gamma-glutamyl-phosphate reductase (340 aa).

Cys-148 is a catalytic residue.

It belongs to the NAGSA dehydrogenase family. Type 1 subfamily.

The protein resides in the cytoplasm. The enzyme catalyses N-acetyl-L-glutamate 5-semialdehyde + phosphate + NADP(+) = N-acetyl-L-glutamyl 5-phosphate + NADPH + H(+). Its pathway is amino-acid biosynthesis; L-arginine biosynthesis; N(2)-acetyl-L-ornithine from L-glutamate: step 3/4. Its function is as follows. Catalyzes the NADPH-dependent reduction of N-acetyl-5-glutamyl phosphate to yield N-acetyl-L-glutamate 5-semialdehyde. The sequence is that of N-acetyl-gamma-glutamyl-phosphate reductase from Methanosarcina mazei (strain ATCC BAA-159 / DSM 3647 / Goe1 / Go1 / JCM 11833 / OCM 88) (Methanosarcina frisia).